A 975-amino-acid polypeptide reads, in one-letter code: Glycine dehydrogenase (decarboxylating) (975 aa).

K723 bears the N6-(pyridoxal phosphate)lysine mark.

It belongs to the GcvP family. In terms of assembly, the glycine cleavage system is composed of four proteins: P, T, L and H. Pyridoxal 5'-phosphate serves as cofactor.

The enzyme catalyses N(6)-[(R)-lipoyl]-L-lysyl-[glycine-cleavage complex H protein] + glycine + H(+) = N(6)-[(R)-S(8)-aminomethyldihydrolipoyl]-L-lysyl-[glycine-cleavage complex H protein] + CO2. In terms of biological role, the glycine cleavage system catalyzes the degradation of glycine. The P protein binds the alpha-amino group of glycine through its pyridoxal phosphate cofactor; CO(2) is released and the remaining methylamine moiety is then transferred to the lipoamide cofactor of the H protein. The sequence is that of Glycine dehydrogenase (decarboxylating) from Burkholderia vietnamiensis (strain G4 / LMG 22486) (Burkholderia cepacia (strain R1808)).